Consider the following 65-residue polypeptide: MARRDALTGKSALSGQSRSHALNATKRKWNLNLQKVRVMNENGSVFNIKVSARTLRTLKKQEKIV.

A disordered region spans residues 1–26 (MARRDALTGKSALSGQSRSHALNATK). A compositionally biased stretch (polar residues) spans 11–22 (SALSGQSRSHAL).

The protein belongs to the bacterial ribosomal protein bL28 family.

This is Large ribosomal subunit protein bL28 from Mycoplasma mycoides subsp. mycoides SC (strain CCUG 32753 / NCTC 10114 / PG1).